A 339-amino-acid chain; its full sequence is Alcohol dehydrogenase notN (339 aa).

Zn(2+) contacts are provided by C44, H65, E66, C99, C102, C110, and C152. H65 lines the an alcohol pocket. NAD(+) contacts are provided by residues 176–181 (GLGGLG), 196–201 (VAISRG), K204, 263–265 (LSF), 287–289 (PSG), and 295–297 (EDA).

This sequence belongs to the zinc-containing alcohol dehydrogenase family. The cofactor is Zn(2+).

The enzyme catalyses a primary alcohol + NAD(+) = an aldehyde + NADH + H(+). It carries out the reaction a secondary alcohol + NAD(+) = a ketone + NADH + H(+). In terms of biological role, alcohol dehydrogenase; part of the gene cluster that mediates the biosynthesis of notoamide, a fungal indole alkaloid that belongs to a family of natural products containing a characteristic bicyclo[2.2.2]diazaoctane core. The first step of notoamide biosynthesis involves coupling of L-proline and L-tryptophan by the bimodular NRPS notE, to produce cyclo-L-tryptophan-L-proline called brevianamide F. The reverse prenyltransferase notF then acts as a deoxybrevianamide E synthase and converts brevianamide F to deoxybrevianamide E via reverse prenylation at C-2 of the indole ring leading to the bicyclo[2.2.2]diazaoctane core. Deoxybrevianamide E is further hydroxylated at C-6 of the indole ring, likely catalyzed by the cytochrome P450 monooxygenase notG, to yield 6-hydroxy-deoxybrevianamide E. 6-hydroxy-deoxybrevianamide E is a specific substrate of the prenyltransferase notC for normal prenylation at C-7 to produce 6-hydroxy-7-prenyl-deoxybrevianamide, also called notoamide S. As the proposed pivotal branching point in notoamide biosynthesis, notoamide S can be diverted to notoamide E through an oxidative pyran ring closure putatively catalyzed by either notH cytochrome P450 monooxygenase or the notD FAD-linked oxidoreductase. This step would be followed by an indole 2,3-epoxidation-initiated pinacol-like rearrangement catalyzed by the notB FAD-dependent monooxygenase leading to the formation of notoamide C and notoamide D. On the other hand notoamide S is converted to notoamide T by notH (or notD), a bifunctional oxidase that also functions as the intramolecular Diels-Alderase responsible for generation of (+)-notoamide T. To generate antipodal (-)-notoaminide T, notH' (or notD') in Aspergillus versicolor is expected to catalyze a Diels-Alder reaction leading to the opposite stereochemistry. The remaining oxidoreductase notD (or notH) likely catalyzes the oxidative pyran ring formation to yield (+)-stephacidin A. The FAD-dependent monooxygenase notI is highly similar to notB and is predicted to catalyze a similar conversion from (+)-stephacidin A to (-)-notoamide B via the 2,3-epoxidation of (+)-stephacidin A followed by a pinacol-type rearrangement. Finally, it remains unclear which enzyme could be responsible for the final hydroxylation steps leading to notoamide A and sclerotiamide. The function of notN in the notoamide biosynthesis has not been determined yet. This chain is Alcohol dehydrogenase notN, found in Aspergillus sp. (strain MF297-2).